The following is a 167-amino-acid chain: MYCPFCRNPDSRVVDSRMADDGSAIRRRRQCPECGRRFTTVETTSLSVIKRSGVGEPFSRSKVINGVRKACQGRPVSEDDLAMLAQEVEEQIRASGAAEIDAHEVGLVILGPLQKLDEVAYLRFASVYQAFESLEDFEAAIAQLRHEAQEDAAERPATPRKPEKTSL.

A zinc finger lies at 3–34; the sequence is CPFCRNPDSRVVDSRMADDGSAIRRRRQCPEC. The region spanning 46–136 is the ATP-cone domain; sequence LSVIKRSGVG…VYQAFESLED (91 aa). Residues 148–167 are disordered; that stretch reads AQEDAAERPATPRKPEKTSL.

The protein belongs to the NrdR family. Zn(2+) is required as a cofactor.

Negatively regulates transcription of bacterial ribonucleotide reductase nrd genes and operons by binding to NrdR-boxes. In Pseudarthrobacter chlorophenolicus (strain ATCC 700700 / DSM 12829 / CIP 107037 / JCM 12360 / KCTC 9906 / NCIMB 13794 / A6) (Arthrobacter chlorophenolicus), this protein is Transcriptional repressor NrdR.